Consider the following 396-residue polypeptide: Ribosomal RNA large subunit methyltransferase I (396 aa).

In terms of domain architecture, PUA spans serine 2–arginine 81.

The protein belongs to the methyltransferase superfamily. RlmI family.

The protein resides in the cytoplasm. The catalysed reaction is cytidine(1962) in 23S rRNA + S-adenosyl-L-methionine = 5-methylcytidine(1962) in 23S rRNA + S-adenosyl-L-homocysteine + H(+). Specifically methylates the cytosine at position 1962 (m5C1962) of 23S rRNA. The sequence is that of Ribosomal RNA large subunit methyltransferase I from Escherichia coli O127:H6 (strain E2348/69 / EPEC).